Consider the following 85-residue polypeptide: UPF0335 protein WP0746 (85 aa).

Belongs to the UPF0335 family.

This Wolbachia pipientis subsp. Culex pipiens (strain wPip) protein is UPF0335 protein WP0746.